A 68-amino-acid polypeptide reads, in one-letter code: Alpha-conotoxin PIVA (68 aa).

An N-terminal signal peptide occupies residues 1 to 16 (MFTVFLLVVLATTVVS). The propeptide occupies 17–41 (FTSDRASDDRNTNDKASRLLSHVVR). 3 disulfides stabilise this stretch: Cys-43-Cys-57, Cys-44-Cys-52, and Cys-55-Cys-64. 4-hydroxyproline; partial is present on residues Pro-48 and Pro-54. 4-hydroxyproline is present on Pro-61. Gln-66 is modified (glutamine amide).

The protein belongs to the conotoxin A superfamily. In terms of tissue distribution, expressed by the venom duct.

The protein resides in the secreted. In terms of biological role, alpha-conotoxins act on postsynaptic membranes, they bind to the nicotinic acetylcholine receptors (nAChR) and thus inhibit them. This toxin has higher affinity for the adult subtype (alpha-1-beta-1-gamma-delta (CHRNA1-CHRNB1-CHRNG-CHRND) subunits) (IC(50)=2.3 nM) of the receptor than for the fetal subtype (alpha-1-beta-1-epsilon-delta (CHRNA1-CHRNB1-CHRND-CHRNE) subunits) (IC(50)=22 nM). The protein is Alpha-conotoxin PIVA of Conus purpurascens (Purple cone).